The sequence spans 652 residues: Starch synthase 1, chloroplastic/amyloplastic (652 aa).

The transit peptide at 1-49 (MASLQISGSVKFEPFVGFNRIRHFRPIASLGFPRFRRRFSIGRSLLLRR) directs the protein to the chloroplast. Lys-156 provides a ligand contact to ADP-alpha-D-glucose.

Belongs to the glycosyltransferase 1 family. Bacterial/plant glycogen synthase subfamily. Expressed in roots, leaves, stems, buds and flowers.

The protein localises to the plastid. Its subcellular location is the chloroplast. It is found in the amyloplast. The enzyme catalyses [(1-&gt;4)-alpha-D-glucosyl](n) + ADP-alpha-D-glucose = [(1-&gt;4)-alpha-D-glucosyl](n+1) + ADP + H(+). The protein operates within glycan biosynthesis; starch biosynthesis. Functionally, involved in the synthesis of short glycan chains within amylopectin in leaves. Is required to generate chains up to about a degree of polymerization of 10 (DP10). The chain is Starch synthase 1, chloroplastic/amyloplastic (SS1) from Arabidopsis thaliana (Mouse-ear cress).